We begin with the raw amino-acid sequence, 109 residues long: Matrix protein 2 (109 aa).

The Virion surface segment spans residues 1–4; it reads MLEP. A helical; Signal-anchor for type III membrane protein transmembrane segment spans residues 5 to 27; it reads FQILSICSFILSALHFMGWTIGH. The Intravirion portion of the chain corresponds to 28 to 109; it reads LNQIKRGVNL…ETVLEVEELH (82 aa). Positions 59-83 form a coiled coil; it reads SYQKEIQAKETIKEVLSDNMERLSD.

As to quaternary structure, homotetramer. In terms of processing, phosphorylated by host.

The protein localises to the virion membrane. It is found in the host cell membrane. Its function is as follows. Forms presumably a highly low-pH gated proton-selective channel. Trp-23 may function as a minimalistic gate that opens and closes the pore. When the environmental pH is lower than a threshold, the BM2 channel would be activated and selectively transport protons across the membrane from the extracellular side to the cytoplasmic side. Crucial for the uncoating process. When the virion is internalized into the endosome, the channel acidifies the virion's interior, promoting the dissociation of matrix protein 1 (M1) from the ribonucleoprotein (RNP) thus allowing the transport of the RNP from the virion into the cell's nucleus. Also plays a role in viral proteins secretory pathway. Elevates the intravesicular pH of normally acidic compartments, such as trans-Golgi network, preventing newly formed hemagglutinin from premature switching to the fusion-active conformation. Plays a crucial role in virion assembly. Expressed in the late phase of the infection. In Homo sapiens (Human), this protein is Matrix protein 2 (M).